A 240-amino-acid polypeptide reads, in one-letter code: Large ribosomal subunit protein bL25 (240 aa).

2 disordered regions span residues 1-20 (MAEN…GPAR) and 220-240 (PAAG…KGKK). Residues 220 to 229 (PAAGAAPAKG) show a composition bias toward low complexity. Positions 230–240 (GEAKGGDKGKK) are enriched in basic and acidic residues.

Belongs to the bacterial ribosomal protein bL25 family. CTC subfamily. As to quaternary structure, part of the 50S ribosomal subunit; part of the 5S rRNA/L5/L18/L25 subcomplex. Contacts the 5S rRNA. Binds to the 5S rRNA independently of L5 and L18.

This is one of the proteins that binds to the 5S RNA in the ribosome where it forms part of the central protuberance. This Anaeromyxobacter dehalogenans (strain 2CP-C) protein is Large ribosomal subunit protein bL25.